Here is a 564-residue protein sequence, read N- to C-terminus: Proline--tRNA ligase (564 aa).

It belongs to the class-II aminoacyl-tRNA synthetase family. ProS type 1 subfamily. As to quaternary structure, homodimer.

It localises to the cytoplasm. The enzyme catalyses tRNA(Pro) + L-proline + ATP = L-prolyl-tRNA(Pro) + AMP + diphosphate. Functionally, catalyzes the attachment of proline to tRNA(Pro) in a two-step reaction: proline is first activated by ATP to form Pro-AMP and then transferred to the acceptor end of tRNA(Pro). As ProRS can inadvertently accommodate and process non-cognate amino acids such as alanine and cysteine, to avoid such errors it has two additional distinct editing activities against alanine. One activity is designated as 'pretransfer' editing and involves the tRNA(Pro)-independent hydrolysis of activated Ala-AMP. The other activity is designated 'posttransfer' editing and involves deacylation of mischarged Ala-tRNA(Pro). The misacylated Cys-tRNA(Pro) is not edited by ProRS. This Xylella fastidiosa (strain M12) protein is Proline--tRNA ligase.